Consider the following 298-residue polypeptide: Nucleotide-binding protein MLBr00563 (298 aa).

21 to 28 is an ATP binding site; the sequence is GLSGAGRG. 72–75 lines the GTP pocket; it reads DVRS.

The protein belongs to the RapZ-like family.

Functionally, displays ATPase and GTPase activities. The chain is Nucleotide-binding protein MLBr00563 from Mycobacterium leprae (strain Br4923).